A 423-amino-acid polypeptide reads, in one-letter code: Adenylosuccinate synthetase (423 aa).

GTP contacts are provided by residues 12 to 18 and 40 to 42; these read GDEGKGK and GHT. The Proton acceptor role is filled by Asp-13. 2 residues coordinate Mg(2+): Asp-13 and Gly-40. IMP is bound by residues 13–16, 38–41, Thr-129, Arg-143, Gln-221, Thr-236, and Arg-300; these read DEGK and NAGH. The active-site Proton donor is the His-41. 296–302 contacts substrate; it reads AVTGRER. Residues Arg-302, 328–330, and 408–410 each bind GTP; these read KSD and SVG.

The protein belongs to the adenylosuccinate synthetase family. As to quaternary structure, homodimer. It depends on Mg(2+) as a cofactor.

It is found in the cytoplasm. The catalysed reaction is IMP + L-aspartate + GTP = N(6)-(1,2-dicarboxyethyl)-AMP + GDP + phosphate + 2 H(+). The protein operates within purine metabolism; AMP biosynthesis via de novo pathway; AMP from IMP: step 1/2. In terms of biological role, plays an important role in the de novo pathway of purine nucleotide biosynthesis. Catalyzes the first committed step in the biosynthesis of AMP from IMP. This Phocaeicola vulgatus (strain ATCC 8482 / DSM 1447 / JCM 5826 / CCUG 4940 / NBRC 14291 / NCTC 11154) (Bacteroides vulgatus) protein is Adenylosuccinate synthetase.